Reading from the N-terminus, the 404-residue chain is uncharacterized protein (404 aa).

12 helical membrane passes run 3-23 (IIAK…PITE), 43-63 (TTQI…LTLG), 73-93 (PVVL…IFAP), 95-115 (IETL…GSVI), 135-155 (SLSP…GYII), 162-182 (YTFV…CKIL), 216-236 (IIGA…FIFI), 248-268 (KLAF…GYLI), 280-300 (ILGL…ALIL), 309-329 (IAVI…NLLI), 346-366 (TAGS…TFLV), and 377-397 (FALL…YILI).

It belongs to the major facilitator superfamily. Bcr/CmlA family.

The protein resides in the cell inner membrane. This is an uncharacterized protein from Rickettsia bellii (strain RML369-C).